The sequence spans 271 residues: Tryptophan synthase alpha chain (271 aa).

Residues glutamate 49 and aspartate 60 each act as proton acceptor in the active site.

Belongs to the TrpA family. In terms of assembly, tetramer of two alpha and two beta chains.

The catalysed reaction is (1S,2R)-1-C-(indol-3-yl)glycerol 3-phosphate + L-serine = D-glyceraldehyde 3-phosphate + L-tryptophan + H2O. It functions in the pathway amino-acid biosynthesis; L-tryptophan biosynthesis; L-tryptophan from chorismate: step 5/5. Its function is as follows. The alpha subunit is responsible for the aldol cleavage of indoleglycerol phosphate to indole and glyceraldehyde 3-phosphate. The sequence is that of Tryptophan synthase alpha chain from Burkholderia pseudomallei (strain 1106a).